The sequence spans 475 residues: Glycogen synthase (475 aa).

K15 contributes to the ADP-alpha-D-glucose binding site.

This sequence belongs to the glycosyltransferase 1 family. Bacterial/plant glycogen synthase subfamily.

The catalysed reaction is [(1-&gt;4)-alpha-D-glucosyl](n) + ADP-alpha-D-glucose = [(1-&gt;4)-alpha-D-glucosyl](n+1) + ADP + H(+). Its pathway is glycan biosynthesis; glycogen biosynthesis. Functionally, synthesizes alpha-1,4-glucan chains using ADP-glucose. The sequence is that of Glycogen synthase from Anaeromyxobacter dehalogenans (strain 2CP-C).